Here is a 231-residue protein sequence, read N- to C-terminus: Probable transglycosylase SceD (231 aa).

Residues 1 to 27 (MKKTLLASSLAVGLGIVAGNAGHEAHA) form the signal peptide. Residues 93-116 (SAQAPATNNVEPSAVQANQVQSQE) are compositionally biased toward polar residues. Residues 93 to 152 (SAQAPATNNVEPSAVQANQVQSQEVEAPQNAQTQQPQASTSNNSQVTATPTESKASEGSS) form a disordered region. Low complexity predominate over residues 119 to 137 (APQNAQTQQPQASTSNNSQ). A compositionally biased stretch (polar residues) spans 138–152 (VTATPTESKASEGSS).

This sequence belongs to the transglycosylase family. SceD subfamily.

Its subcellular location is the secreted. Is able to cleave peptidoglycan and affects clumping and separation of bacterial cells. The protein is Probable transglycosylase SceD (sceD) of Staphylococcus aureus (strain Mu3 / ATCC 700698).